The following is a 157-amino-acid chain: UPF0251 protein CLM_1546 (157 aa).

Belongs to the UPF0251 family.

This Clostridium botulinum (strain Kyoto / Type A2) protein is UPF0251 protein CLM_1546.